The chain runs to 73 residues: Putative antitoxin VapB9 (73 aa).

Antitoxin component of a possible type II toxin-antitoxin (TA) system. The cognate toxin is VapC9. This is Putative antitoxin VapB9 (vapB9) from Mycobacterium tuberculosis (strain CDC 1551 / Oshkosh).